Reading from the N-terminus, the 148-residue chain is Hemoglobin subunit beta-B (148 aa).

One can recognise a Globin domain in the interval 3 to 148 (DWTDAERAAI…VVSALGRQYH (146 aa)). His64 and His93 together coordinate heme b.

Belongs to the globin family. Heterotetramer of two alpha chains and two beta chains. Red blood cells.

In terms of biological role, involved in oxygen transport from gills to the various peripheral tissues. In Seriola quinqueradiata (Five-ray yellowtail), this protein is Hemoglobin subunit beta-B (hbb2).